A 476-amino-acid chain; its full sequence is Lactate utilization protein B (476 aa).

2 4Fe-4S ferredoxin-type domains span residues 304-334 (GTEF…GHSY) and 353-382 (YDDY…LHEL). Positions 313, 316, 319, 323, 366, 369, and 373 each coordinate [4Fe-4S] cluster. Residues 440 to 476 (KGPGPLKAWTESREFPAPSKERFRDWFQTRQKGGNPS) are disordered. The segment covering 449–466 (TESREFPAPSKERFRDWF) has biased composition (basic and acidic residues). A compositionally biased stretch (polar residues) spans 467 to 476 (QTRQKGGNPS).

The protein belongs to the LutB/YkgF family.

Functionally, is involved in L-lactate degradation and allows cells to grow with lactate as the sole carbon source. Has probably a role as an electron transporter during oxidation of L-lactate. The sequence is that of Lactate utilization protein B from Geobacillus kaustophilus (strain HTA426).